Reading from the N-terminus, the 433-residue chain is Transcription factor TCP18 (433 aa).

2 disordered regions span residues 130–163 (QRIS…GTRD) and 247–281 (DDRG…RTPI). Positions 148 to 206 (RTDRHSKIKTAKGTRDRRMRLSLDVAKELFGLQDMLGFDKASKTVEWLLTQAKPEIIKI) constitute a TCP domain. A R domain is found at 287-304 (KEERAKARERAKGRTMEK).

Expressed in unelongated axillary buds, and, to a lower extent, in axillary structures such as flowers and siliques.

It is found in the nucleus. In terms of biological role, transcription factor that prevents axillary bud outgrowth and delays early axillary bud development. Indirectly required for the auxin-induced control of apical dominance. This chain is Transcription factor TCP18, found in Arabidopsis thaliana (Mouse-ear cress).